Reading from the N-terminus, the 216-residue chain is Peptide methionine sulfoxide reductase MsrA (216 aa).

Cysteine 54 is a catalytic residue.

This sequence belongs to the MsrA Met sulfoxide reductase family.

It catalyses the reaction L-methionyl-[protein] + [thioredoxin]-disulfide + H2O = L-methionyl-(S)-S-oxide-[protein] + [thioredoxin]-dithiol. It carries out the reaction [thioredoxin]-disulfide + L-methionine + H2O = L-methionine (S)-S-oxide + [thioredoxin]-dithiol. Has an important function as a repair enzyme for proteins that have been inactivated by oxidation. Catalyzes the reversible oxidation-reduction of methionine sulfoxide in proteins to methionine. This Xylella fastidiosa (strain Temecula1 / ATCC 700964) protein is Peptide methionine sulfoxide reductase MsrA.